The following is a 695-amino-acid chain: Protein arginine N-methyltransferase 7 (695 aa).

SAM-dependent MTase PRMT-type domains follow at residues 14-345 (SVEW…YCVW) and 358-684 (RVHP…ITMD). Residue Arg-32 is modified to Omega-N-methylarginine. Residues Glu-144 and Glu-153 contribute to the active site.

It belongs to the class I-like SAM-binding methyltransferase superfamily. Protein arginine N-methyltransferase family. PRMT7 subfamily. In terms of assembly, homodimer and heterodimer. Interacts with CTCFL, PRMT5 and SNRPD3.

The protein localises to the cytoplasm. Its subcellular location is the cytosol. The protein resides in the nucleus. It catalyses the reaction L-arginyl-[protein] + S-adenosyl-L-methionine = N(omega)-methyl-L-arginyl-[protein] + S-adenosyl-L-homocysteine + H(+). Functionally, arginine methyltransferase that can both catalyze the formation of omega-N monomethylarginine (MMA) and symmetrical dimethylarginine (sDMA), with a preference for the formation of MMA. Specifically mediates the symmetrical dimethylation of arginine residues in the small nuclear ribonucleoproteins Sm D1 (SNRPD1) and Sm D3 (SNRPD3); such methylation being required for the assembly and biogenesis of snRNP core particles. Specifically mediates the symmetric dimethylation of histone H4 'Arg-3' to form H4R3me2s. Plays a role in gene imprinting by being recruited by CTCFL at the H19 imprinted control region (ICR) and methylating histone H4 to form H4R3me2s, possibly leading to recruit DNA methyltransferases at these sites. May also play a role in embryonic stem cell (ESC) pluripotency. Also able to mediate the arginine methylation of histone H2A and myelin basic protein (MBP) in vitro; the relevance of such results is however unclear in vivo. The polypeptide is Protein arginine N-methyltransferase 7 (PRMT7) (Bos taurus (Bovine)).